The primary structure comprises 100 residues: NADH-quinone oxidoreductase subunit K (100 aa).

3 consecutive transmembrane segments (helical) span residues Leu4–Ile24, Leu28–Val48, and Val60–Leu80.

Belongs to the complex I subunit 4L family. As to quaternary structure, NDH-1 is composed of 13 different subunits. Subunits NuoA, H, J, K, L, M, N constitute the membrane sector of the complex.

Its subcellular location is the cell inner membrane. The enzyme catalyses a quinone + NADH + 5 H(+)(in) = a quinol + NAD(+) + 4 H(+)(out). Its function is as follows. NDH-1 shuttles electrons from NADH, via FMN and iron-sulfur (Fe-S) centers, to quinones in the respiratory chain. The immediate electron acceptor for the enzyme in this species is believed to be ubiquinone. Couples the redox reaction to proton translocation (for every two electrons transferred, four hydrogen ions are translocated across the cytoplasmic membrane), and thus conserves the redox energy in a proton gradient. The sequence is that of NADH-quinone oxidoreductase subunit K from Musicola paradisiaca (strain Ech703) (Dickeya paradisiaca).